The sequence spans 444 residues: Transcription activator AKTR-1 (444 aa).

Residues 16 to 43 (CDFCTQSKLRCNKNKPSCRRCTIQQQPC) constitute a DNA-binding region (zn(2)-C6 fungal-type). The disordered stretch occupies residues 49 to 87 (RRTGRPPKHPRKANDCQEANGQHGEQDPVTSTPGGSCQQ). The segment covering 50–59 (RTGRPPKHPR) has biased composition (basic residues). Positions 76–87 (PVTSTPGGSCQQ) are enriched in polar residues.

Its subcellular location is the nucleus. Functionally, transcription factor that regulates the expression of the gene clusters that mediate the biosynthesis of the host-selective toxins (HSTs) AK-toxins responsible for Japanese pear black spot disease by the Japanese pear pathotype. AK-toxins are esters of 9,10-epoxy 8-hydroxy 9-methyldecatrienoic acid (EDA). On cellular level, AK-toxins affect plasma membrane of susceptible cells and cause a sudden increase in loss of K(+) after a few minutes of toxin treatment. The polypeptide is Transcription activator AKTR-1 (Alternaria alternata (Alternaria rot fungus)).